Reading from the N-terminus, the 222-residue chain is ATP-dependent dethiobiotin synthetase BioD (222 aa).

12–17 is a binding site for ATP; it reads DVGKTF. Thr16 serves as a coordination point for Mg(2+). The active site involves Lys37. Ser41 contacts substrate. ATP-binding positions include Asp54 and 113–116; that span reads EGAG. Mg(2+) contacts are provided by Asp54 and Glu113.

Belongs to the dethiobiotin synthetase family. Homodimer. Mg(2+) is required as a cofactor.

The protein resides in the cytoplasm. The enzyme catalyses (7R,8S)-7,8-diammoniononanoate + CO2 + ATP = (4R,5S)-dethiobiotin + ADP + phosphate + 3 H(+). It participates in cofactor biosynthesis; biotin biosynthesis; biotin from 7,8-diaminononanoate: step 1/2. In terms of biological role, catalyzes a mechanistically unusual reaction, the ATP-dependent insertion of CO2 between the N7 and N8 nitrogen atoms of 7,8-diaminopelargonic acid (DAPA, also called 7,8-diammoniononanoate) to form a ureido ring. The chain is ATP-dependent dethiobiotin synthetase BioD from Anoxybacillus flavithermus (strain DSM 21510 / WK1).